The following is a 143-amino-acid chain: Nucleoside diphosphate kinase (143 aa).

K11, F59, R87, T93, R104, and N114 together coordinate ATP. H117 functions as the Pros-phosphohistidine intermediate in the catalytic mechanism.

It belongs to the NDK family. In terms of assembly, homotetramer. Mg(2+) serves as cofactor.

It is found in the cytoplasm. It catalyses the reaction a 2'-deoxyribonucleoside 5'-diphosphate + ATP = a 2'-deoxyribonucleoside 5'-triphosphate + ADP. The catalysed reaction is a ribonucleoside 5'-diphosphate + ATP = a ribonucleoside 5'-triphosphate + ADP. Its function is as follows. Major role in the synthesis of nucleoside triphosphates other than ATP. The ATP gamma phosphate is transferred to the NDP beta phosphate via a ping-pong mechanism, using a phosphorylated active-site intermediate. The sequence is that of Nucleoside diphosphate kinase from Shewanella frigidimarina (strain NCIMB 400).